We begin with the raw amino-acid sequence, 155 residues long: Ribonuclease H (155 aa).

The RNase H type-1 domain maps to 5–146; that stretch reads DQKPVIIHTD…ADQLARDGLT (142 aa). Positions 14, 52, 74, and 138 each coordinate Mg(2+). A disordered region spans residues 133–155; sequence ENERADQLARDGLTENRMKSRVK.

It belongs to the RNase H family. In terms of assembly, monomer. Mg(2+) is required as a cofactor.

Its subcellular location is the cytoplasm. The catalysed reaction is Endonucleolytic cleavage to 5'-phosphomonoester.. In terms of biological role, endonuclease that specifically degrades the RNA of RNA-DNA hybrids. The protein is Ribonuclease H of Rhodopseudomonas palustris (strain ATCC BAA-98 / CGA009).